Consider the following 158-residue polypeptide: Dysbindin domain-containing protein 1 (158 aa).

Disordered stretches follow at residues 1 to 50 (MEPP…VPAP) and 93 to 158 (ADSD…PQED). Residues S95 and S119 each carry the phosphoserine modification. Residues 125–141 (TRAEQSHEKQPLGDPER) are compositionally biased toward basic and acidic residues.

The protein belongs to the dysbindin family.

This Homo sapiens (Human) protein is Dysbindin domain-containing protein 1 (DBNDD1).